A 326-amino-acid chain; its full sequence is tRNA N6-adenosine threonylcarbamoyltransferase (326 aa).

His113 and His117 together coordinate Fe cation. Substrate is bound by residues 134-138 (VASGG), Asp167, Gly180, and Asn267. Asp291 is a binding site for Fe cation.

The protein belongs to the KAE1 / TsaD family. Fe(2+) is required as a cofactor.

The protein localises to the cytoplasm. The catalysed reaction is L-threonylcarbamoyladenylate + adenosine(37) in tRNA = N(6)-L-threonylcarbamoyladenosine(37) in tRNA + AMP + H(+). Required for the formation of a threonylcarbamoyl group on adenosine at position 37 (t(6)A37) in tRNAs that read codons beginning with adenine. Is involved in the transfer of the threonylcarbamoyl moiety of threonylcarbamoyl-AMP (TC-AMP) to the N6 group of A37, together with TsaE and TsaB. TsaD likely plays a direct catalytic role in this reaction. The polypeptide is tRNA N6-adenosine threonylcarbamoyltransferase (Thermus thermophilus (strain ATCC 27634 / DSM 579 / HB8)).